The sequence spans 506 residues: NAD(P)H-quinone oxidoreductase subunit 2 (506 aa).

14 helical membrane passes run A14–A34, W42–W62, L79–W99, P108–G128, L132–Y152, L167–L187, F206–V226, P240–I260, L276–Q296, M302–T322, V330–F350, L374–G394, L409–I429, and I462–F482.

It belongs to the complex I subunit 2 family. NDH-1 can be composed of about 15 different subunits; different subcomplexes with different compositions have been identified which probably have different functions.

The protein resides in the cellular thylakoid membrane. The enzyme catalyses a plastoquinone + NADH + (n+1) H(+)(in) = a plastoquinol + NAD(+) + n H(+)(out). It catalyses the reaction a plastoquinone + NADPH + (n+1) H(+)(in) = a plastoquinol + NADP(+) + n H(+)(out). Functionally, NDH-1 shuttles electrons from an unknown electron donor, via FMN and iron-sulfur (Fe-S) centers, to quinones in the respiratory and/or the photosynthetic chain. The immediate electron acceptor for the enzyme in this species is believed to be plastoquinone. Couples the redox reaction to proton translocation, and thus conserves the redox energy in a proton gradient. Cyanobacterial NDH-1 also plays a role in inorganic carbon-concentration. The protein is NAD(P)H-quinone oxidoreductase subunit 2 of Prochlorococcus marinus subsp. pastoris (strain CCMP1986 / NIES-2087 / MED4).